A 457-amino-acid polypeptide reads, in one-letter code: Ribulose bisphosphate carboxylase-like protein (457 aa).

Mg(2+)-binding residues include lysine 199, aspartate 201, and glutamate 202. Lysine 199 is subject to N6-carboxylysine. The segment at 426 to 457 (AIAAFGKPAHGQAASPQPSEQASEPDAAGGDS) is disordered.

This sequence belongs to the RuBisCO large chain family. Type IV subfamily. Requires Mg(2+) as cofactor.

Its function is as follows. May be involved in sulfur metabolism and oxidative stress response. Does not show RuBisCO activity. This is Ribulose bisphosphate carboxylase-like protein from Allochromatium vinosum (strain ATCC 17899 / DSM 180 / NBRC 103801 / NCIMB 10441 / D) (Chromatium vinosum).